The sequence spans 476 residues: Aspartyl/glutamyl-tRNA(Asn/Gln) amidotransferase subunit B (476 aa).

This sequence belongs to the GatB/GatE family. GatB subfamily. Heterotrimer of A, B and C subunits.

It carries out the reaction L-glutamyl-tRNA(Gln) + L-glutamine + ATP + H2O = L-glutaminyl-tRNA(Gln) + L-glutamate + ADP + phosphate + H(+). It catalyses the reaction L-aspartyl-tRNA(Asn) + L-glutamine + ATP + H2O = L-asparaginyl-tRNA(Asn) + L-glutamate + ADP + phosphate + 2 H(+). Its function is as follows. Allows the formation of correctly charged Asn-tRNA(Asn) or Gln-tRNA(Gln) through the transamidation of misacylated Asp-tRNA(Asn) or Glu-tRNA(Gln) in organisms which lack either or both of asparaginyl-tRNA or glutaminyl-tRNA synthetases. The reaction takes place in the presence of glutamine and ATP through an activated phospho-Asp-tRNA(Asn) or phospho-Glu-tRNA(Gln). This Oleidesulfovibrio alaskensis (strain ATCC BAA-1058 / DSM 17464 / G20) (Desulfovibrio alaskensis) protein is Aspartyl/glutamyl-tRNA(Asn/Gln) amidotransferase subunit B.